Here is a 232-residue protein sequence, read N- to C-terminus: Small ribosomal subunit protein uS3 (232 aa).

The region spanning 39 to 107 is the KH type-2 domain; sequence VRQFLTKELS…PAQINIAEVR (69 aa).

Belongs to the universal ribosomal protein uS3 family. Part of the 30S ribosomal subunit. Forms a tight complex with proteins S10 and S14.

Its function is as follows. Binds the lower part of the 30S subunit head. Binds mRNA in the 70S ribosome, positioning it for translation. In Sodalis glossinidius (strain morsitans), this protein is Small ribosomal subunit protein uS3.